The following is a 4158-amino-acid chain: Dynein axonemal heavy chain 6 (4158 aa).

The segment at Met1 to Thr1433 is stem. Ile192–Leu199 contacts ATP. Residues Cys805–Ala859 adopt a coiled-coil conformation. 4 AAA regions span residues Tyr1434–Met1655, Ser1715–Ser1948, Lys2058–Gly2306, and Asp2408–Arg2659. ATP is bound by residues Gly1472–Thr1479, Gly1753–Thr1760, Gly2096–Ser2103, and Gly2447–Gln2454. A stalk region spans residues Ser2676 to Leu2961. Residues Lys2901–Val2996 adopt a coiled-coil conformation. AAA regions lie at residues Leu3042–Thr3272 and Leu3509–Leu3730.

The protein belongs to the dynein heavy chain family. The dynein complex consists of at least two heavy chains and a number of intermediate and light chains. Expressed in several tissues, including brain, pituitary, testis and trachea, with highest levels in testis.

It localises to the cytoplasm. It is found in the cytoskeleton. The protein localises to the cilium axoneme. Its function is as follows. Force generating protein of respiratory cilia. Produces force towards the minus ends of microtubules. Dynein has ATPase activity; the force-producing power stroke is thought to occur on release of ADP. In Homo sapiens (Human), this protein is Dynein axonemal heavy chain 6.